A 277-amino-acid chain; its full sequence is Undecaprenyl-diphosphatase 2 (277 aa).

6 consecutive transmembrane segments (helical) span residues 43-63 (RAMA…VWEF), 87-107 (LLIA…TIHE), 109-129 (LFNP…MLWA), 183-203 (AATE…AVYS), 214-234 (SDLP…MIAV), and 254-274 (IAFG…WTAA).

This sequence belongs to the UppP family.

It is found in the cell inner membrane. The enzyme catalyses di-trans,octa-cis-undecaprenyl diphosphate + H2O = di-trans,octa-cis-undecaprenyl phosphate + phosphate + H(+). In terms of biological role, catalyzes the dephosphorylation of undecaprenyl diphosphate (UPP). Confers resistance to bacitracin. The protein is Undecaprenyl-diphosphatase 2 of Pseudomonas fluorescens (strain Pf0-1).